The primary structure comprises 409 residues: MGKLHSKHACKRRENPEGDSFVVNGFIAKRAAEEDERYGNNLKDYKNEELKDGRLTLLHCPLQVVLPPEKAEGCESFLQYLSPDDGERDAQKVKKRISLQDLECNVSLAEDNRQEWVFTLYDFDNSGKVTKEDMSSLMHTIYDVVDASVKHSCNTKRRSLRVKLSVTPEPAARRRDATHTERETSHLSQVEPVRSEEHRSADRRQSTHIRGQTEAHEGNHYCVDENTERRNHYLDLAGIENYTSRFDSSSPDADQDPPSRSSHSQSRPHSQEPETHVYQRRSQLIEPCVAPDPRLRTGPQLIRSRSPKGSSRFPGVIPNVTKTSKCHGHHQPIPTGQDVYHLTQQNHTHAHTPSGLQHSHSRRIRSRAREQQALTPVKNTNATALVQRHEHHHHHEHHHHHHYHHYHQT.

Residue glycine 2 is the site of N-myristoyl glycine attachment. Residues 109-144 form the EF-hand domain; that stretch reads AEDNRQEWVFTLYDFDNSGKVTKEDMSSLMHTIYDV. Ca(2+) contacts are provided by aspartate 122, aspartate 124, serine 126, lysine 128, and aspartate 133. 4 disordered regions span residues 166–224, 243–315, 346–367, and 388–409; these read VTPE…YCVD, TSRF…RFPG, NHTH…IRSR, and RHEH…YHQT. Composition is skewed to basic and acidic residues over residues 171 to 185 and 193 to 224; these read AARR…RETS and VRSE…YCVD. Low complexity predominate over residues 247–268; the sequence is DSSSPDADQDPPSRSSHSQSRP. Positions 389-409 are enriched in basic residues; it reads HEHHHHHEHHHHHHYHHYHQT.

This sequence belongs to the NKD family.

It is found in the cell membrane. The protein localises to the cytoplasm. In terms of biological role, cell autonomous antagonist of both the canonical and non-canonical Wnt signaling pathways. In Danio rerio (Zebrafish), this protein is Protein naked cuticle homolog 2-like (nkd2l).